A 223-amino-acid polypeptide reads, in one-letter code: MNIILFGPPGAGKGTQAHRLVHDFGMVQLSTGDILRQAVKEGTEVGKIAGELMKAGKLIPDDLMIRILGERLDKPDTKNGVIFDGFPRTKPQVEALDKLLAERHSKLDCVIEIKVDENALVKRIVGRYVCAQCGAGYHDEFKRPHKEGVCDICGSTEFKRRPDDNEEAVRARLVEYHEKTAPILPVYEARGIVAYVDGMLPMGDVATKIAEILKEKGAKPISA.

10-15 (GAGKGT) is an ATP binding site. Positions 30-59 (STGDILRQAVKEGTEVGKIAGELMKAGKLI) are NMP. Residues Thr31, Arg36, 57–59 (KLI), 85–88 (GFPR), and Gln92 contribute to the AMP site. The LID stretch occupies residues 126-163 (GRYVCAQCGAGYHDEFKRPHKEGVCDICGSTEFKRRPD). Arg127 is a binding site for ATP. Zn(2+)-binding residues include Cys130, Cys133, Cys150, and Cys153. 2 residues coordinate AMP: Arg160 and Arg172. Leu200 is a binding site for ATP.

The protein belongs to the adenylate kinase family. Monomer.

The protein localises to the cytoplasm. The catalysed reaction is AMP + ATP = 2 ADP. Its pathway is purine metabolism; AMP biosynthesis via salvage pathway; AMP from ADP: step 1/1. In terms of biological role, catalyzes the reversible transfer of the terminal phosphate group between ATP and AMP. Plays an important role in cellular energy homeostasis and in adenine nucleotide metabolism. This chain is Adenylate kinase, found in Zymomonas mobilis subsp. mobilis (strain ATCC 31821 / ZM4 / CP4).